Reading from the N-terminus, the 107-residue chain is Phosphoribosyl-ATP pyrophosphatase (107 aa).

It belongs to the PRA-PH family.

Its subcellular location is the cytoplasm. It catalyses the reaction 1-(5-phospho-beta-D-ribosyl)-ATP + H2O = 1-(5-phospho-beta-D-ribosyl)-5'-AMP + diphosphate + H(+). The protein operates within amino-acid biosynthesis; L-histidine biosynthesis; L-histidine from 5-phospho-alpha-D-ribose 1-diphosphate: step 2/9. The protein is Phosphoribosyl-ATP pyrophosphatase of Methylobacterium nodulans (strain LMG 21967 / CNCM I-2342 / ORS 2060).